The following is a 339-amino-acid chain: NADH-quinone oxidoreductase subunit H (339 aa).

The next 8 helical transmembrane spans lie at 19–39, 87–107, 120–140, 153–173, 191–211, 253–273, 275–295, and 310–330; these read LLKI…LTLA, FLLG…VVPF, LLYI…AGWA, SAAQ…GVLM, FWEW…ISAV, ILVA…PVPF, PDSI…FLWF, and LGWK…GAMM.

It belongs to the complex I subunit 1 family. NDH-1 is composed of 14 different subunits. Subunits NuoA, H, J, K, L, M, N constitute the membrane sector of the complex.

It is found in the cell inner membrane. It catalyses the reaction a quinone + NADH + 5 H(+)(in) = a quinol + NAD(+) + 4 H(+)(out). Functionally, NDH-1 shuttles electrons from NADH, via FMN and iron-sulfur (Fe-S) centers, to quinones in the respiratory chain. The immediate electron acceptor for the enzyme in this species is believed to be ubiquinone. Couples the redox reaction to proton translocation (for every two electrons transferred, four hydrogen ions are translocated across the cytoplasmic membrane), and thus conserves the redox energy in a proton gradient. This subunit may bind ubiquinone. This chain is NADH-quinone oxidoreductase subunit H, found in Methylobacillus flagellatus (strain ATCC 51484 / DSM 6875 / VKM B-1610 / KT).